Reading from the N-terminus, the 140-residue chain is Nucleoside diphosphate kinase (140 aa).

ATP-binding residues include Lys-11, Phe-59, Arg-87, Thr-93, Arg-104, and Asn-114. His-117 serves as the catalytic Pros-phosphohistidine intermediate.

It belongs to the NDK family. As to quaternary structure, homotetramer. Requires Mg(2+) as cofactor.

The protein localises to the cytoplasm. The enzyme catalyses a 2'-deoxyribonucleoside 5'-diphosphate + ATP = a 2'-deoxyribonucleoside 5'-triphosphate + ADP. The catalysed reaction is a ribonucleoside 5'-diphosphate + ATP = a ribonucleoside 5'-triphosphate + ADP. Major role in the synthesis of nucleoside triphosphates other than ATP. The ATP gamma phosphate is transferred to the NDP beta phosphate via a ping-pong mechanism, using a phosphorylated active-site intermediate. The protein is Nucleoside diphosphate kinase of Jannaschia sp. (strain CCS1).